The chain runs to 269 residues: Energy-coupling factor transporter ATP-binding protein EcfA1 (269 aa).

In terms of domain architecture, ABC transporter spans 8 to 242; it reads IVFKNVSFQY…AEGLTTIGLD (235 aa). 42-49 serves as a coordination point for ATP; that stretch reads GHNGSGKS.

This sequence belongs to the ABC transporter superfamily. Energy-coupling factor EcfA family. In terms of assembly, forms a stable energy-coupling factor (ECF) transporter complex composed of 2 membrane-embedded substrate-binding proteins (S component), 2 ATP-binding proteins (A component) and 2 transmembrane proteins (T component).

Its subcellular location is the cell membrane. Functionally, ATP-binding (A) component of a common energy-coupling factor (ECF) ABC-transporter complex. Unlike classic ABC transporters this ECF transporter provides the energy necessary to transport a number of different substrates. The sequence is that of Energy-coupling factor transporter ATP-binding protein EcfA1 from Staphylococcus aureus (strain bovine RF122 / ET3-1).